Reading from the N-terminus, the 198-residue chain is Recombination protein RecR (198 aa).

The C4-type zinc finger occupies 57–72; the sequence is CSVCGHITDQDPCYIC. Residues 80-175 form the Toprim domain; sequence SVICVVQDPK…KLSRIAHGLP (96 aa).

It belongs to the RecR family.

May play a role in DNA repair. It seems to be involved in an RecBC-independent recombinational process of DNA repair. It may act with RecF and RecO. This Bacillus subtilis (strain 168) protein is Recombination protein RecR.